We begin with the raw amino-acid sequence, 381 residues long: Peptidoglycan glycosyltransferase MrdB (381 aa).

A run of 10 helical transmembrane segments spans residues 11 to 31 (FDLLPFVFIIPLLVVSFLLIF), 40 to 60 (KQGVYYAIGFILFWIVFFIPF), 66 to 86 (WLFVFYWACVILLALVDFMGY), 99 to 119 (FISITLQPSEPVKIAILLLLA), 132 to 152 (YDWGMFLKLSFYICLPAALIL), 156 to 176 (DLGTALIVLIMGFGILLIVGL), 180 to 200 (VWLPLFIALLVASPIAYHFLH), 263 to 283 (FGFLGAMLLFAIYIGLSLHLF), 297 to 317 (IVALGISILIFVYSSVNIAMT), and 328 to 348 (LPLFSYGGSSFITFMILFGIL).

This sequence belongs to the SEDS family. MrdB/RodA subfamily.

The protein localises to the cell inner membrane. The catalysed reaction is [GlcNAc-(1-&gt;4)-Mur2Ac(oyl-L-Ala-gamma-D-Glu-L-Lys-D-Ala-D-Ala)](n)-di-trans,octa-cis-undecaprenyl diphosphate + beta-D-GlcNAc-(1-&gt;4)-Mur2Ac(oyl-L-Ala-gamma-D-Glu-L-Lys-D-Ala-D-Ala)-di-trans,octa-cis-undecaprenyl diphosphate = [GlcNAc-(1-&gt;4)-Mur2Ac(oyl-L-Ala-gamma-D-Glu-L-Lys-D-Ala-D-Ala)](n+1)-di-trans,octa-cis-undecaprenyl diphosphate + di-trans,octa-cis-undecaprenyl diphosphate + H(+). Its pathway is cell wall biogenesis; peptidoglycan biosynthesis. In terms of biological role, peptidoglycan polymerase that is essential for cell wall elongation. The chain is Peptidoglycan glycosyltransferase MrdB from Helicobacter pylori (strain ATCC 700392 / 26695) (Campylobacter pylori).